Consider the following 117-residue polypeptide: Ig heavy chain V region MOPC 104E (117 aa).

The region spanning 1-116 (EVQLQQSGPE…WGAGTTVTVS (116 aa)) is the Ig-like domain. Residues Cys22 and Cys96 are joined by a disulfide bond. N-linked (GlcNAc...) (high mannose) asparagine; atypical glycosylation occurs at Asn55.

In Mus musculus (Mouse), this protein is Ig heavy chain V region MOPC 104E.